Consider the following 114-residue polypeptide: Progonadoliberin-2 (114 aa).

The N-terminal stretch at 1 to 25 (MASSMLGFLLLLLLLMAAHPGPSEA) is a signal peptide. The segment at 22-80 (PSEAQHWSHGWYPGGKRASNSPQDPQSALRPPAPSAAQTAHSFRSAALASPEDSVPWEG) is disordered. Glycine amide is present on G35.

It belongs to the GnRH family. In terms of tissue distribution, midbrain.

Its subcellular location is the secreted. Functionally, stimulates the secretion of gonadotropins; it stimulates the secretion of both luteinizing and follicle-stimulating hormones. This chain is Progonadoliberin-2 (GNRH2), found in Tupaia belangeri (Common tree shrew).